We begin with the raw amino-acid sequence, 104 residues long: Large ribosomal subunit protein uL23 (104 aa).

It belongs to the universal ribosomal protein uL23 family. In terms of assembly, part of the 50S ribosomal subunit. Contacts protein L29, and trigger factor when it is bound to the ribosome.

Its function is as follows. One of the early assembly proteins it binds 23S rRNA. One of the proteins that surrounds the polypeptide exit tunnel on the outside of the ribosome. Forms the main docking site for trigger factor binding to the ribosome. The protein is Large ribosomal subunit protein uL23 of Rhodospirillum rubrum (strain ATCC 11170 / ATH 1.1.1 / DSM 467 / LMG 4362 / NCIMB 8255 / S1).